The following is a 236-amino-acid chain: Peptidase E (236 aa).

Residues Ser122, Asp137, and His159 each act as charge relay system in the active site.

The protein belongs to the peptidase S51 family.

It localises to the cytoplasm. The catalysed reaction is Dipeptidase E catalyzes the hydrolysis of dipeptides Asp-|-Xaa. It does not act on peptides with N-terminal Glu, Asn or Gln, nor does it cleave isoaspartyl peptides.. Functionally, hydrolyzes dipeptides containing N-terminal aspartate residues. May play a role in allowing the cell to use peptide aspartate to spare carbon otherwise required for the synthesis of the aspartate family of amino acids. This is Peptidase E from Shewanella sp. (strain ANA-3).